Consider the following 227-residue polypeptide: Cytochrome c oxidase subunit 2 (227 aa).

Topologically, residues 1–14 (MTHPLQLGFQDATS) are mitochondrial intermembrane. A helical transmembrane segment spans residues 15–45 (PIMEELLHFHDHTLMIVFLISSLVLYIITLM). The Mitochondrial matrix segment spans residues 46–59 (LTTKLTHTSTMDAQ). A helical membrane pass occupies residues 60–87 (EVETVWTILPAIILILIALPSLRILYMM). Residues 88 to 227 (DEINNPLLTV…YFEDWSVSMT (140 aa)) are Mitochondrial intermembrane-facing. Cu cation-binding residues include His161, Cys196, Glu198, Cys200, His204, and Met207. Glu198 is a binding site for Mg(2+). Position 218 is a phosphotyrosine (Tyr218).

The protein belongs to the cytochrome c oxidase subunit 2 family. In terms of assembly, component of the cytochrome c oxidase (complex IV, CIV), a multisubunit enzyme composed of 14 subunits. The complex is composed of a catalytic core of 3 subunits MT-CO1, MT-CO2 and MT-CO3, encoded in the mitochondrial DNA, and 11 supernumerary subunits COX4I, COX5A, COX5B, COX6A, COX6B, COX6C, COX7A, COX7B, COX7C, COX8 and NDUFA4, which are encoded in the nuclear genome. The complex exists as a monomer or a dimer and forms supercomplexes (SCs) in the inner mitochondrial membrane with NADH-ubiquinone oxidoreductase (complex I, CI) and ubiquinol-cytochrome c oxidoreductase (cytochrome b-c1 complex, complex III, CIII), resulting in different assemblies (supercomplex SCI(1)III(2)IV(1) and megacomplex MCI(2)III(2)IV(2)). Found in a complex with TMEM177, COA6, COX18, COX20, SCO1 and SCO2. Interacts with TMEM177 in a COX20-dependent manner. Interacts with COX20. Interacts with COX16. The cofactor is Cu cation.

The protein localises to the mitochondrion inner membrane. The catalysed reaction is 4 Fe(II)-[cytochrome c] + O2 + 8 H(+)(in) = 4 Fe(III)-[cytochrome c] + 2 H2O + 4 H(+)(out). In terms of biological role, component of the cytochrome c oxidase, the last enzyme in the mitochondrial electron transport chain which drives oxidative phosphorylation. The respiratory chain contains 3 multisubunit complexes succinate dehydrogenase (complex II, CII), ubiquinol-cytochrome c oxidoreductase (cytochrome b-c1 complex, complex III, CIII) and cytochrome c oxidase (complex IV, CIV), that cooperate to transfer electrons derived from NADH and succinate to molecular oxygen, creating an electrochemical gradient over the inner membrane that drives transmembrane transport and the ATP synthase. Cytochrome c oxidase is the component of the respiratory chain that catalyzes the reduction of oxygen to water. Electrons originating from reduced cytochrome c in the intermembrane space (IMS) are transferred via the dinuclear copper A center (CU(A)) of subunit 2 and heme A of subunit 1 to the active site in subunit 1, a binuclear center (BNC) formed by heme A3 and copper B (CU(B)). The BNC reduces molecular oxygen to 2 water molecules using 4 electrons from cytochrome c in the IMS and 4 protons from the mitochondrial matrix. This Carlito syrichta (Philippine tarsier) protein is Cytochrome c oxidase subunit 2 (MT-CO2).